Reading from the N-terminus, the 253-residue chain is Ferritin-2, chloroplastic (253 aa).

The N-terminal 45 residues, 1 to 45 (MLHKASPALSLLSSGYTGGGNLFPPSRNSSNLLFSPSGSRFSVQA), are a transit peptide targeting the chloroplast. Positions 46-82 (AKGTNTKSLTGVVFEPFEEVKKEMELVPTTPFVSLAR) are extension peptide (EP). The Ferritin-like diiron domain occupies 83-236 (HKFSDDSESA…EYVAQLRRIG (154 aa)). Glu-100, Glu-135, His-138, Glu-184, and Gln-218 together coordinate Fe cation.

It belongs to the ferritin family. Oligomer of 24 subunits. There are two types of subunits: L (light) chain and H (heavy) chain. The major chain can be light or heavy, depending on the species and tissue type. The functional molecule forms a roughly spherical shell with a diameter of 12 nm and contains a central cavity into which the insoluble mineral iron core is deposited.

It is found in the plastid. It localises to the chloroplast. It catalyses the reaction 4 Fe(2+) + O2 + 4 H(+) = 4 Fe(3+) + 2 H2O. Its function is as follows. Stores iron in a soluble, non-toxic, readily available form. Important for iron homeostasis. Has ferroxidase activity. Iron is taken up in the ferrous form and deposited as ferric hydroxides after oxidation. In Arabidopsis thaliana (Mouse-ear cress), this protein is Ferritin-2, chloroplastic (FER2).